A 125-amino-acid polypeptide reads, in one-letter code: Ly6/PLAUR domain-containing protein 2 (125 aa).

Positions 1 to 22 are cleaved as a signal peptide; that stretch reads MRGTRLALLALVLAACGELAPA. Positions 25–100 constitute a UPAR/Ly6 domain; it reads CYVCPEPTGV…VSCCNTELCN (76 aa). N-linked (GlcNAc...) asparagine glycosylation occurs at asparagine 46. The GPI-anchor amidated glycine moiety is linked to residue glycine 103. A propeptide spans 104-125 (removed in mature form); that stretch reads APALNSLHCGALTLLPLLSLRL.

It is found in the cell membrane. This chain is Ly6/PLAUR domain-containing protein 2 (LYPD2), found in Homo sapiens (Human).